A 124-amino-acid polypeptide reads, in one-letter code: Fluoride-specific ion channel FluC (124 aa).

The next 4 membrane-spanning stretches (helical) occupy residues 4-24 (LIFV…ISIF), 35-55 (FGTL…YALG), 62-82 (PEIK…FSTF), and 102-122 (IALN…LVFS). Na(+)-binding residues include glycine 74 and threonine 77.

Belongs to the fluoride channel Fluc/FEX (TC 1.A.43) family.

Its subcellular location is the cell inner membrane. It catalyses the reaction fluoride(in) = fluoride(out). With respect to regulation, na(+) is not transported, but it plays an essential structural role and its presence is essential for fluoride channel function. Its function is as follows. Fluoride-specific ion channel. Important for reducing fluoride concentration in the cell, thus reducing its toxicity. The sequence is that of Fluoride-specific ion channel FluC from Shewanella loihica (strain ATCC BAA-1088 / PV-4).